A 472-amino-acid polypeptide reads, in one-letter code: Uronate isomerase (472 aa).

This sequence belongs to the metallo-dependent hydrolases superfamily. Uronate isomerase family.

The enzyme catalyses D-glucuronate = D-fructuronate. It catalyses the reaction aldehydo-D-galacturonate = keto-D-tagaturonate. It participates in carbohydrate metabolism; pentose and glucuronate interconversion. The polypeptide is Uronate isomerase (Nostoc punctiforme (strain ATCC 29133 / PCC 73102)).